A 431-amino-acid polypeptide reads, in one-letter code: Cyclic GMP-AMP synthase-like receptor (431 aa).

Residues Ser-73 and 85-87 each bind ATP; that span reads EFD. 3 residues coordinate Mg(2+): Glu-85, Asp-87, and Asp-212. Position 212 (Asp-212) interacts with GTP. ATP is bound by residues Lys-290 and 304 to 308; that span reads SYALK. Glu-316 is a Mn(2+) binding site.

Belongs to the mab-21 family. The cofactor is Mg(2+). It depends on Mn(2+) as a cofactor.

It carries out the reaction GTP + ATP = 2',3'-cGAMP + 2 diphosphate. It catalyses the reaction GTP + ATP = pppGp(2'-5')A + diphosphate. The enzyme catalyses pppGp(2'-5')A = 2',3'-cGAMP + diphosphate. Its function is as follows. Nucleotidyltransferase that catalyzes the formation of cyclic GMP-AMP (2',3'-cGAMP) from ATP and GTP and plays a key role in innate immunity. Acts as a key sensor of double-stranded RNA (dsRNA), the presence of dsRNA in the cytoplasm being a danger signal that triggers the immune responses. Directly binds dsRNA, activating the nucleotidyltransferase activity, leading to synthesis of 2',3'-cGAMP, a second messenger that binds to and activates Sting, thereby triggering the immune response via activation of the NF-kappa-B transcription factor. The sequence is that of Cyclic GMP-AMP synthase-like receptor from Frankliniella occidentalis (Western flower thrips).